Reading from the N-terminus, the 898-residue chain is Transportin-1 (898 aa).

HEAT repeat units follow at residues 19–46, 51–89, 98–131, 137–174, 181–211, 224–251, 263–290, 306–397, 405–433, 445–472, 486–519, 527–560, 568–606, 614–665, 676–707, 715–748, 756–791, 799–832, 841–872, and 875–895; these read GLQQILQLLKESQSPDTTIQRTVQQKLE, YPDFNNYLIFVLTKLKSEDEPTRSLSGLILKNNVKAHFQ, FIKSECLNNIGDSSPLIRATVGILITTIASKGEL, LLPKLCSLLDSEDYNTCEGAFGALQKICEDSAEILDSD, NIMIPKFLQFFKHSSPKIRSHAVACVNQFII, FIENLFALAGDEEAEVRKNVCRALVMLL, HNIVEYMLQRTQDQDENVALEACEFWLT, PKLI…LANV, HILPLLKELLFHHEWVVKESGILVLGAIA, PELIPHLIQCLSDKKALVRSITCWTLSR, LKPLMTELLKRILDSNKRVQEAACSAFATLEEEA, LAYILDTLVFAFSKYQHKNLLILYDAIGTLADSV, EYIQMLMPPLIQKWNMLKDEDKDLFPLLECLSSVATALQ, EPVY…GLGG, ILTLMYQCMQDKMPEVRQSSFALLGDLTKACF, ADFMPILGTNLNPEFISVCNNATWAIGEISIQMG, PMVLHQLVEIINRPNTPKTLLENTAITIGRLGYVCP, QQFIRPWCTSLRNIRDNEEKDSAFRGICTMISVN, IFFCDAVASWINPKDDLRDMFCKILHGFKNQV, and ENWRRFSDQFPLPLKERLAAF. Residues 41-109 form the Importin N-terminal domain; the sequence is VQQKLEQLNQ…KSECLNNIGD (69 aa). A disordered region spans residues 347–374; it reads FHRSRTVAQQHEEDGIEEEDDDDDEIDD. Acidic residues predominate over residues 360–374; that stretch reads DGIEEEDDDDDEIDD.

It belongs to the importin beta family. Importin beta-2 subfamily. Identified in a complex that contains TNPO1, RAN and RANBP1. Binds HNRPA1, HNRPA2, HNRNPDL, RPS7, RPL5 and RAN. Interacts with H2A, H2B, H3 and H4 histones. Interacts with isoform 1 and isoform 5 of ADAR/ADAR1 (via DRBM 3 domain). Interacts with SNAI1 (via zinc fingers); the interaction mediates SNAI1 nuclear import. Interacts with SNAI2 (via zinc fingers). Interacts with RPL23A (via BIB domain) and SRP19; this interaction is involved in RPL23A and SRP19 import into the nucleus. Interacts (via HEAT repeats 8-12) with BAP1 (via non-classical PY-NLS); this interaction is direct, is involved in BAP1 nuclear import and disrupts BAP1 homodimerization.

The protein resides in the cytoplasm. It localises to the nucleus. Functions in nuclear protein import as nuclear transport receptor. Serves as receptor for nuclear localization signals (NLS) in cargo substrates. May mediate docking of the importin/substrate complex to the nuclear pore complex (NPC) through binding to nucleoporin and the complex is subsequently translocated through the pore by an energy requiring, Ran-dependent mechanism. At the nucleoplasmic side of the NPC, Ran binds to the importin, the importin/substrate complex dissociates and importin is re-exported from the nucleus to the cytoplasm where GTP hydrolysis releases Ran. The directionality of nuclear import is thought to be conferred by an asymmetric distribution of the GTP- and GDP-bound forms of Ran between the cytoplasm and nucleus. Involved in nuclear import of M9-containing proteins. In vitro, binds directly to the M9 region of the heterogeneous nuclear ribonucleoproteins (hnRNP), A1 and A2 and mediates their nuclear import. Involved in hnRNP A1/A2 nuclear export. Mediates the nuclear import of ribosomal proteins RPL23A, RPS7 and RPL5. In vitro, mediates nuclear import of SRP19. Mediates the import of histones H2A, H2B, H3 and H4. Mediates nuclear import of ADAR/ADAR1 in a RanGTP-dependent manner. Main mediator of PR-DUB complex component BAP1 nuclear import; acts redundantly with the karyopherins KPNA1 and KPNA2. This chain is Transportin-1 (Tnpo1), found in Mus musculus (Mouse).